The primary structure comprises 461 residues: Fumarate hydratase class II (461 aa).

Residues Ser99–Thr101, Arg127, His130–Asp133, Ser140–Asn142, and Thr188 contribute to the substrate site. The active-site Proton donor/acceptor is the His189. Ser319 is an active-site residue. Substrate is bound by residues Ser320 and Lys325 to Asn327.

The protein belongs to the class-II fumarase/aspartase family. Fumarase subfamily. Homotetramer.

Its subcellular location is the cytoplasm. It catalyses the reaction (S)-malate = fumarate + H2O. Its pathway is carbohydrate metabolism; tricarboxylic acid cycle; (S)-malate from fumarate: step 1/1. Its function is as follows. Involved in the TCA cycle. Catalyzes the stereospecific interconversion of fumarate to L-malate. This is Fumarate hydratase class II from Chromobacterium violaceum (strain ATCC 12472 / DSM 30191 / JCM 1249 / CCUG 213 / NBRC 12614 / NCIMB 9131 / NCTC 9757 / MK).